We begin with the raw amino-acid sequence, 323 residues long: Aldo-keto reductase family 1 member C4 (323 aa).

NADP(+) contacts are provided by residues 20–24 and Asp50; that span reads GFGTY. Tyr55 acts as the Proton donor in catalysis. His117 contributes to the substrate binding site. NADP(+)-binding positions include 166–167, Gln190, 216–221, and 270–280; these read SN, HSALGT, and KSYNEQRIREN.

The protein belongs to the aldo/keto reductase family. Monomer.

The protein localises to the cytoplasm. It localises to the cytosol. The enzyme catalyses chlordecone alcohol + NADP(+) = chlordecone + NADPH + H(+). The catalysed reaction is a 3alpha-hydroxysteroid + NADP(+) = a 3-oxosteroid + NADPH + H(+). It carries out the reaction a 3alpha-hydroxysteroid + NAD(+) = a 3-oxosteroid + NADH + H(+). It catalyses the reaction 5alpha-androstane-3alpha,17beta-diol + NADP(+) = 17beta-hydroxy-5alpha-androstan-3-one + NADPH + H(+). The enzyme catalyses 5alpha-androstane-3beta,17beta-diol + NADP(+) = 17beta-hydroxy-5alpha-androstan-3-one + NADPH + H(+). The catalysed reaction is 5alpha-androstane-3alpha,17beta-diol + NAD(+) = 17beta-hydroxy-5alpha-androstan-3-one + NADH + H(+). It carries out the reaction 17beta-estradiol + NADP(+) = estrone + NADPH + H(+). It catalyses the reaction 17beta-estradiol + NAD(+) = estrone + NADH + H(+). The enzyme catalyses (20S)-hydroxypregn-4-en-3-one + NADP(+) = progesterone + NADPH + H(+). The catalysed reaction is (20S)-hydroxypregn-4-en-3-one + NAD(+) = progesterone + NADH + H(+). It carries out the reaction androsterone + NADP(+) = 5alpha-androstan-3,17-dione + NADPH + H(+). It catalyses the reaction testosterone + NADP(+) = androst-4-ene-3,17-dione + NADPH + H(+). The enzyme catalyses testosterone + NAD(+) = androst-4-ene-3,17-dione + NADH + H(+). The catalysed reaction is 3alpha-hydroxy-5alpha-androstane 17-O-(beta-D-glucuronate) + NADP(+) = 5alpha-dihydrotestosterone 17-O-(beta-D-glucuronate) + NADPH + H(+). It carries out the reaction (3beta,5alpha,17beta)-3-hydroxy-androstan-17-yl sulfate + NADP(+) = 5alpha-dihydrotestosterone sulfate + NADPH + H(+). It catalyses the reaction 5alpha-androstane-3alpha,17beta-diol + NAD(+) = androsterone + NADH + H(+). Its pathway is steroid metabolism. Cytosolic aldo-keto reductase that catalyzes the NADH and NADPH-dependent reduction of ketosteroids to hydroxysteroids. Liver specific enzyme that acts as an NAD(P)(H)-dependent 3-, 17- and 20-ketosteroid reductase on the steroid nucleus and side chain. Displays the ability to catalyze both oxidation and reduction in vitro, but most probably acts as a reductase in vivo since the oxidase activity measured in vitro is inhibited by physiological concentration of NADPH. Acts preferentially as a 3-alpha-hydroxysteroid dehydrogenase (HSD) with a subsidiary 3-beta-HSD activity. Catalyzes efficiently the transformation of the potent androgen 5-alpha-dihydrotestosterone (5alpha-DHT or 17beta-hydroxy-5alpha-androstan-3-one) into the less active form, 5-alpha-androstan-3-alpha,17-beta-diol (3-alpha-diol). Catalyzes the reduction of estrone into 17beta-estradiol but with low efficiency. Metabolizes a broad spectrum of natural and synthetic therapeutic steroid and plays an important role in metabolism of androgens, estrogens, progestereone and conjugated steroids. Catalyzes the biotransformation of the pesticide chlordecone (kepone) to its corresponding alcohol leading to increased biliary excretion of the pesticide and concomitant reduction of its neurotoxicity since bile is the major excretory route. In Macaca fascicularis (Crab-eating macaque), this protein is Aldo-keto reductase family 1 member C4 (AKR1C4).